The following is a 253-amino-acid chain: 5-oxoprolinase subunit A (253 aa).

It belongs to the LamB/PxpA family. In terms of assembly, forms a complex composed of PxpA, PxpB and PxpC.

It carries out the reaction 5-oxo-L-proline + ATP + 2 H2O = L-glutamate + ADP + phosphate + H(+). In terms of biological role, catalyzes the cleavage of 5-oxoproline to form L-glutamate coupled to the hydrolysis of ATP to ADP and inorganic phosphate. This Bacillus anthracis (strain CDC 684 / NRRL 3495) protein is 5-oxoprolinase subunit A.